Reading from the N-terminus, the 523-residue chain is GMP synthase [glutamine-hydrolyzing] (523 aa).

The Glutamine amidotransferase type-1 domain maps to 8 to 205; it reads KILILDFGSQ…VVNICGCETK (198 aa). Cys85 functions as the Nucleophile in the catalytic mechanism. Catalysis depends on residues His179 and Glu181. Residues 206 to 398 form the GMPS ATP-PPase domain; that stretch reads WTAENIIEDA…LGLPAEMINR (193 aa). 233–239 is an ATP binding site; the sequence is SGGVDSS.

As to quaternary structure, homodimer.

The enzyme catalyses XMP + L-glutamine + ATP + H2O = GMP + L-glutamate + AMP + diphosphate + 2 H(+). The protein operates within purine metabolism; GMP biosynthesis; GMP from XMP (L-Gln route): step 1/1. Catalyzes the synthesis of GMP from XMP. The protein is GMP synthase [glutamine-hydrolyzing] of Haemophilus influenzae (strain PittGG).